A 309-amino-acid chain; its full sequence is MKTRSKLAAGFLTLMSVATLAACSGKTSNGTNVVTMKGDTITVSDFYDQVKTSKAAQQSMLTLILSRVFDTQYGDKVSDKKVSEAYNKTAKGYGNSFSSALSQAGLTPEGYKQQIRTTMLVEYAVKEAAKKELTEANYKEAYKNYTPETSVQVIKLDAEDKAKSVLKDVKADGADFAKIAKEKTTATDKKVEYKFDSAGTTLPKEVMSAAFKLDKNGVSDVVSTVDSTTYKTSYYIIKVTDKTEKKSDWKSYKNRLKEVILKDKTSDRAFQNKVISKALEKANVKIKDKAFAGILSQYATTSGSSSLKK.

Residues 1 to 22 (MKTRSKLAAGFLTLMSVATLAA) form the signal peptide. C23 carries the N-palmitoyl cysteine lipid modification. C23 carries S-diacylglycerol cysteine lipidation. The PpiC domain maps to 146-241 (TPETSVQVIK…TSYYIIKVTD (96 aa)).

The protein belongs to the PrsA family.

The protein localises to the cell membrane. It carries out the reaction [protein]-peptidylproline (omega=180) = [protein]-peptidylproline (omega=0). Plays a major role in protein secretion by helping the post-translocational extracellular folding of several secreted proteins. This Streptococcus agalactiae serotype V (strain ATCC BAA-611 / 2603 V/R) protein is Foldase protein PrsA.